A 786-amino-acid polypeptide reads, in one-letter code: Endonuclease MutS2 (786 aa).

333–340 (GPNTGGKT) contacts ATP. Residues 682–709 (EKIKPSKQSAAQRPVVKVSGGGMSGPST) form a disordered region. Residues 711-786 (LDLRGERYDQ…GSGATIVNFK (76 aa)) enclose the Smr domain.

This sequence belongs to the DNA mismatch repair MutS family. MutS2 subfamily. As to quaternary structure, homodimer. Binds to stalled ribosomes, contacting rRNA.

Endonuclease that is involved in the suppression of homologous recombination and thus may have a key role in the control of bacterial genetic diversity. Functionally, acts as a ribosome collision sensor, splitting the ribosome into its 2 subunits. Detects stalled/collided 70S ribosomes which it binds and splits by an ATP-hydrolysis driven conformational change. Acts upstream of the ribosome quality control system (RQC), a ribosome-associated complex that mediates the extraction of incompletely synthesized nascent chains from stalled ribosomes and their subsequent degradation. Probably generates substrates for RQC. The sequence is that of Endonuclease MutS2 from Lacticaseibacillus casei (strain BL23) (Lactobacillus casei).